Reading from the N-terminus, the 468-residue chain is UDP-N-acetylmuramoyl-L-alanine--L-glutamate ligase (468 aa).

An ATP-binding site is contributed by 122 to 128 (GTKGKST).

This sequence belongs to the MurCDEF family. MurD2 subfamily.

The protein localises to the cytoplasm. It carries out the reaction UDP-N-acetyl-alpha-D-muramoyl-L-alanine + L-glutamate + ATP = UDP-N-acetyl-alpha-D-muramoyl-L-alanyl-L-glutamate + ADP + phosphate + H(+). Its pathway is cell wall biogenesis; peptidoglycan biosynthesis. In terms of biological role, cell wall formation. Catalyzes the addition of L-glutamate to the nucleotide precursor UDP-N-acetylmuramoyl-L-alanine. The polypeptide is UDP-N-acetylmuramoyl-L-alanine--L-glutamate ligase (Xanthomonas euvesicatoria pv. vesicatoria (strain 85-10) (Xanthomonas campestris pv. vesicatoria)).